Consider the following 155-residue polypeptide: Large ribosomal subunit protein uL16 (155 aa).

This sequence belongs to the universal ribosomal protein uL16 family. As to quaternary structure, part of the 50S ribosomal subunit.

Functionally, binds 23S rRNA and is also seen to make contacts with the A and possibly P site tRNAs. The protein is Large ribosomal subunit protein uL16 of Synechococcus sp. (strain CC9311).